The primary structure comprises 165 residues: Protein SprT (165 aa).

The 144-residue stretch at 20 to 163 (EKLAQANLKL…RCVHCGEQLV (144 aa)) folds into the SprT-like domain. Residue His-78 participates in Zn(2+) binding. Glu-79 is a catalytic residue. Zn(2+) is bound at residue His-82.

It belongs to the SprT family. The cofactor is Zn(2+).

The protein localises to the cytoplasm. This Shigella boydii serotype 18 (strain CDC 3083-94 / BS512) protein is Protein SprT.